Reading from the N-terminus, the 439-residue chain is GTPase Der (439 aa).

EngA-type G domains lie at 4–169 (AMVS…PQEE) and 177–352 (IKIA…EEYN). GTP is bound by residues 10 to 17 (GRPNVGKS), 57 to 61 (DTGGL), 120 to 123 (NKVD), 183 to 190 (GKPNVGKS), 230 to 234 (DTAGI), and 295 to 298 (NKWD). Positions 353–437 (KRITTGLLNN…PIVISTKKRG (85 aa)) constitute a KH-like domain.

This sequence belongs to the TRAFAC class TrmE-Era-EngA-EngB-Septin-like GTPase superfamily. EngA (Der) GTPase family. Associates with the 50S ribosomal subunit.

In terms of biological role, GTPase that plays an essential role in the late steps of ribosome biogenesis. This chain is GTPase Der, found in Thermoanaerobacter sp. (strain X514).